The primary structure comprises 275 residues: 2,3,4,5-tetrahydropyridine-2,6-dicarboxylate N-succinyltransferase (275 aa).

Substrate is bound by residues R104 and D141.

Belongs to the transferase hexapeptide repeat family. As to quaternary structure, homotrimer.

It is found in the cytoplasm. It catalyses the reaction (S)-2,3,4,5-tetrahydrodipicolinate + succinyl-CoA + H2O = (S)-2-succinylamino-6-oxoheptanedioate + CoA. It functions in the pathway amino-acid biosynthesis; L-lysine biosynthesis via DAP pathway; LL-2,6-diaminopimelate from (S)-tetrahydrodipicolinate (succinylase route): step 1/3. The polypeptide is 2,3,4,5-tetrahydropyridine-2,6-dicarboxylate N-succinyltransferase (Haemophilus influenzae (strain PittEE)).